Consider the following 184-residue polypeptide: UPF0398 protein BALH_1408 (184 aa).

The protein belongs to the UPF0398 family.

The chain is UPF0398 protein BALH_1408 from Bacillus thuringiensis (strain Al Hakam).